The chain runs to 968 residues: RNA polymerase-associated protein RapA (968 aa).

The region spanning 163-332 (EVGQRFAPRV…FARLRLLDPD (170 aa)) is the Helicase ATP-binding domain. 176–183 (DEVGLGKT) contributes to the ATP binding site. The DEAH box signature appears at 278–281 (DEAH). Residues 491–678 (RVDWLIDFLK…GTKARYQELK (188 aa)) form the Helicase C-terminal domain.

It belongs to the SNF2/RAD54 helicase family. RapA subfamily. As to quaternary structure, interacts with the RNAP. Has a higher affinity for the core RNAP than for the holoenzyme. Its ATPase activity is stimulated by binding to RNAP.

Transcription regulator that activates transcription by stimulating RNA polymerase (RNAP) recycling in case of stress conditions such as supercoiled DNA or high salt concentrations. Probably acts by releasing the RNAP, when it is trapped or immobilized on tightly supercoiled DNA. Does not activate transcription on linear DNA. Probably not involved in DNA repair. The protein is RNA polymerase-associated protein RapA of Shewanella pealeana (strain ATCC 700345 / ANG-SQ1).